The primary structure comprises 215 residues: Kunitz trypsin inhibitor 4 (215 aa).

The N-terminal stretch at 1–28 (MTKTTKTMNPKFYLVLALTAVLASNAYG) is a signal peptide. Intrachain disulfides connect C66/C112 and C165/C176. A glycan (N-linked (GlcNAc...) asparagine) is linked at N206.

This sequence belongs to the protease inhibitor I3 (leguminous Kunitz-type inhibitor) family. As to expression, expressed in roots.

The protein resides in the endoplasmic reticulum. Functionally, exhibits Kunitz trypsin protease inhibitor activity. Involved in modulating programmed cell death (PCD) in plant-pathogen interactions. Can inhibit both serine proteases and cysteine proteases. May be involved in the modulation of the proteases that participate in the hydrolysis of dietary proteins in the gut of spider mites. In Arabidopsis thaliana (Mouse-ear cress), this protein is Kunitz trypsin inhibitor 4.